A 942-amino-acid chain; its full sequence is DNA mismatch repair protein MutS (942 aa).

ATP is bound at residue 613 to 620 (GPNMAGKS).

Belongs to the DNA mismatch repair MutS family.

In terms of biological role, this protein is involved in the repair of mismatches in DNA. It is possible that it carries out the mismatch recognition step. This protein has a weak ATPase activity. The chain is DNA mismatch repair protein MutS from Clostridium botulinum (strain Eklund 17B / Type B).